The primary structure comprises 192 residues: uncharacterized protein (192 aa).

The Nudix hydrolase domain occupies 29-160 (QRQAAVLIPV…PLDVYRRGNS (132 aa)). The Nudix box signature appears at 67–89 (GAVDSTDASLIAAALREAQEEVA). Mg(2+) contacts are provided by Glu-83 and Glu-87.

Belongs to the Nudix hydrolase family. PCD1 subfamily. The cofactor is Mn(2+). Mg(2+) is required as a cofactor.

Probably mediates the hydrolysis of some nucleoside diphosphate derivatives. This is an uncharacterized protein from Salmonella newport (strain SL254).